Consider the following 311-residue polypeptide: Putative HTH-type transcriptional regulatory protein PTO0557 (311 aa).

Residues 132–186 (MRRIRELKGYSVGYLSSKLGISRRSISLYESGSSATIDIYLKLEETLGEDLTKDI) form the HTH cro/C1-type domain. The H-T-H motif DNA-binding region spans 143–162 (VGYLSSKLGISRRSISLYES).

This Picrophilus torridus (strain ATCC 700027 / DSM 9790 / JCM 10055 / NBRC 100828 / KAW 2/3) protein is Putative HTH-type transcriptional regulatory protein PTO0557.